The sequence spans 297 residues: UDP-N-acetylenolpyruvoylglucosamine reductase (297 aa).

An FAD-binding PCMH-type domain is found at 26-191; the sequence is KSGGTADWLF…VAARFRGHPG (166 aa). Arg171 is a catalytic residue. The active-site Proton donor is the Ser220. Glu290 is a catalytic residue.

The protein belongs to the MurB family. FAD serves as cofactor.

Its subcellular location is the cytoplasm. The catalysed reaction is UDP-N-acetyl-alpha-D-muramate + NADP(+) = UDP-N-acetyl-3-O-(1-carboxyvinyl)-alpha-D-glucosamine + NADPH + H(+). The protein operates within cell wall biogenesis; peptidoglycan biosynthesis. Its function is as follows. Cell wall formation. This chain is UDP-N-acetylenolpyruvoylglucosamine reductase, found in Novosphingobium aromaticivorans (strain ATCC 700278 / DSM 12444 / CCUG 56034 / CIP 105152 / NBRC 16084 / F199).